The sequence spans 270 residues: 2-dehydro-3-deoxyphosphooctonate aldolase (270 aa).

This sequence belongs to the KdsA family.

The protein localises to the cytoplasm. It catalyses the reaction D-arabinose 5-phosphate + phosphoenolpyruvate + H2O = 3-deoxy-alpha-D-manno-2-octulosonate-8-phosphate + phosphate. It functions in the pathway carbohydrate biosynthesis; 3-deoxy-D-manno-octulosonate biosynthesis; 3-deoxy-D-manno-octulosonate from D-ribulose 5-phosphate: step 2/3. Its pathway is bacterial outer membrane biogenesis; lipopolysaccharide biosynthesis. The protein is 2-dehydro-3-deoxyphosphooctonate aldolase of Helicobacter hepaticus (strain ATCC 51449 / 3B1).